Reading from the N-terminus, the 380-residue chain is Queuine tRNA-ribosyltransferase (380 aa).

D96 serves as the catalytic Proton acceptor. Substrate contacts are provided by residues 96 to 100 (DSGGF), D150, Q193, and G220. The interval 251–257 (GVGAPDS) is RNA binding. D270 serves as the catalytic Nucleophile. The RNA binding; important for wobble base 34 recognition stretch occupies residues 275-279 (TRIAR). Positions 308, 310, 313, and 339 each coordinate Zn(2+).

The protein belongs to the queuine tRNA-ribosyltransferase family. In terms of assembly, homodimer. Within each dimer, one monomer is responsible for RNA recognition and catalysis, while the other monomer binds to the replacement base PreQ1. Zn(2+) serves as cofactor.

The catalysed reaction is 7-aminomethyl-7-carbaguanine + guanosine(34) in tRNA = 7-aminomethyl-7-carbaguanosine(34) in tRNA + guanine. Its pathway is tRNA modification; tRNA-queuosine biosynthesis. Its function is as follows. Catalyzes the base-exchange of a guanine (G) residue with the queuine precursor 7-aminomethyl-7-deazaguanine (PreQ1) at position 34 (anticodon wobble position) in tRNAs with GU(N) anticodons (tRNA-Asp, -Asn, -His and -Tyr). Catalysis occurs through a double-displacement mechanism. The nucleophile active site attacks the C1' of nucleotide 34 to detach the guanine base from the RNA, forming a covalent enzyme-RNA intermediate. The proton acceptor active site deprotonates the incoming PreQ1, allowing a nucleophilic attack on the C1' of the ribose to form the product. After dissociation, two additional enzymatic reactions on the tRNA convert PreQ1 to queuine (Q), resulting in the hypermodified nucleoside queuosine (7-(((4,5-cis-dihydroxy-2-cyclopenten-1-yl)amino)methyl)-7-deazaguanosine). This is Queuine tRNA-ribosyltransferase from Streptococcus thermophilus (strain ATCC BAA-250 / LMG 18311).